The sequence spans 153 residues: Peptide deformylase (153 aa).

Fe cation is bound by residues Cys87 and His129. Glu130 is a catalytic residue. His133 serves as a coordination point for Fe cation.

Belongs to the polypeptide deformylase family. It depends on Fe(2+) as a cofactor.

It carries out the reaction N-terminal N-formyl-L-methionyl-[peptide] + H2O = N-terminal L-methionyl-[peptide] + formate. Functionally, removes the formyl group from the N-terminal Met of newly synthesized proteins. Requires at least a dipeptide for an efficient rate of reaction. N-terminal L-methionine is a prerequisite for activity but the enzyme has broad specificity at other positions. The protein is Peptide deformylase of Dictyoglomus thermophilum (strain ATCC 35947 / DSM 3960 / H-6-12).